The primary structure comprises 246 residues: Small ribosomal subunit protein uS2 (246 aa).

This sequence belongs to the universal ribosomal protein uS2 family. As to quaternary structure, component of the small ribosomal subunit. Mature ribosomes consist of a small (40S) and a large (60S) subunit. The 40S subunit contains about 33 different proteins and 1 molecule of RNA (18S). The 60S subunit contains about 49 different proteins and 3 molecules of RNA (25S, 5.8S and 5S). Interacts with ribosomal protein S21.

Its subcellular location is the cytoplasm. Required for the assembly and/or stability of the 40S ribosomal subunit. Required for the processing of the 20S rRNA-precursor to mature 18S rRNA in a late step of the maturation of 40S ribosomal subunits. The chain is Small ribosomal subunit protein uS2 from Leishmania infantum.